Here is a 206-residue protein sequence, read N- to C-terminus: MARYIGPKCKLSRREGTDLFLKGRGRSLDTKCKLDKAPGQHGDRRARLSDYGLQLREKQKLRRIYGVLERQFRNYYKTASRMKGSTGENLLQLLERRLDNVVYRMGFGATRAEARQLVSHKAIQVNGQAVNIASYQVQPSDVVAVREKAKKQVRIQDSLTLAEQFGFPEWVEVDTKKMEGVFKSIPERSELPAEINESLVVELYSK.

Positions 96–157 (RRLDNVVYRM…KAKKQVRIQD (62 aa)) constitute an S4 RNA-binding domain.

It belongs to the universal ribosomal protein uS4 family. As to quaternary structure, part of the 30S ribosomal subunit. Contacts protein S5. The interaction surface between S4 and S5 is involved in control of translational fidelity.

Functionally, one of the primary rRNA binding proteins, it binds directly to 16S rRNA where it nucleates assembly of the body of the 30S subunit. Its function is as follows. With S5 and S12 plays an important role in translational accuracy. This Thioalkalivibrio sulfidiphilus (strain HL-EbGR7) protein is Small ribosomal subunit protein uS4.